A 277-amino-acid chain; its full sequence is Phosphatidylglycerol--prolipoprotein diacylglyceryl transferase (277 aa).

The next 4 helical transmembrane spans lie at isoleucine 18–alanine 38, isoleucine 51–tyrosine 71, isoleucine 89–isoleucine 109, and isoleucine 116–glycine 136. An a 1,2-diacyl-sn-glycero-3-phospho-(1'-sn-glycerol)-binding site is contributed by arginine 137. Helical transmembrane passes span glutamine 177–isoleucine 197, glycine 205–methionine 225, and phenylalanine 235–tyrosine 255.

The protein belongs to the Lgt family.

It is found in the cell membrane. It carries out the reaction L-cysteinyl-[prolipoprotein] + a 1,2-diacyl-sn-glycero-3-phospho-(1'-sn-glycerol) = an S-1,2-diacyl-sn-glyceryl-L-cysteinyl-[prolipoprotein] + sn-glycerol 1-phosphate + H(+). It functions in the pathway protein modification; lipoprotein biosynthesis (diacylglyceryl transfer). Its function is as follows. Catalyzes the transfer of the diacylglyceryl group from phosphatidylglycerol to the sulfhydryl group of the N-terminal cysteine of a prolipoprotein, the first step in the formation of mature lipoproteins. The polypeptide is Phosphatidylglycerol--prolipoprotein diacylglyceryl transferase (Listeria monocytogenes serovar 1/2a (strain ATCC BAA-679 / EGD-e)).